Consider the following 179-residue polypeptide: MEQFHATTIVCVRRGNKVALGGDGQVTLGNIVIKGTARKIRRLYHDKILAGFAGATADAFTLQERFEAKLEKHQGHLMRAAVELTRDWRTDRVLRRLEAMLIVADAEHTLVLTGNGDVLEPEHGLAAIGSGGAYAQSAALALLRNTELSPQDIVKQSLEIAGDICIYTNQNHVIETLGE.

Thr-7 is a catalytic residue. Na(+)-binding residues include Gly-162, Cys-165, and Thr-168.

It belongs to the peptidase T1B family. HslV subfamily. A double ring-shaped homohexamer of HslV is capped on each side by a ring-shaped HslU homohexamer. The assembly of the HslU/HslV complex is dependent on binding of ATP.

The protein localises to the cytoplasm. The catalysed reaction is ATP-dependent cleavage of peptide bonds with broad specificity.. With respect to regulation, allosterically activated by HslU binding. Protease subunit of a proteasome-like degradation complex believed to be a general protein degrading machinery. The sequence is that of ATP-dependent protease subunit HslV from Bordetella petrii (strain ATCC BAA-461 / DSM 12804 / CCUG 43448).